The sequence spans 466 residues: Uronate isomerase (466 aa).

This sequence belongs to the metallo-dependent hydrolases superfamily. Uronate isomerase family.

It carries out the reaction D-glucuronate = D-fructuronate. The catalysed reaction is aldehydo-D-galacturonate = keto-D-tagaturonate. The protein operates within carbohydrate metabolism; pentose and glucuronate interconversion. This chain is Uronate isomerase, found in Streptococcus agalactiae serotype III (strain NEM316).